A 223-amino-acid chain; its full sequence is uncharacterized protein (223 aa).

The next 5 helical transmembrane spans lie at 28–48 (LSNT…GLIT), 59–79 (LIVQ…ITLA), 88–108 (AFNQ…MFFI), 128–148 (IVGL…VWLS), and 176–196 (AWAI…YMIV).

It is found in the cell membrane. This is an uncharacterized protein from Mycoplasma pneumoniae (strain ATCC 29342 / M129 / Subtype 1) (Mycoplasmoides pneumoniae).